Consider the following 35-residue polypeptide: Peptide ToHyp2 (35 aa).

Positions 1–29 are enriched in pro residues; sequence LPKPPLLPPPVPGLAPGLPPLPVPDPVPH. The segment at 1–35 is disordered; the sequence is LPKPPLLPPPVPGLAPGLPPLPVPDPVPHPPKKPP. Hydroxyproline is present on residues P5, P9, P10, P12, P16, P20, P31, and P35.

In terms of processing, O-glycosylated; contains pentose side chains at some or all of the hydroxyproline residues. Glycosylation is required for full antifungal activity.

Antimicrobial peptide. Inhibits elongation of hyphae in B.sorokiniana (IC(50)=3.8 uM) but has no effect on this process or on germination of conidia in a panel of other phytopathogenic fungi. At concentrations above 10 uM, has antibacterial activity. The chain is Peptide ToHyp2 from Taraxacum officinale (Common dandelion).